A 274-amino-acid polypeptide reads, in one-letter code: Diaminopimelate epimerase (274 aa).

Substrate contacts are provided by asparagine 11 and asparagine 76. Residue cysteine 85 is the Proton donor of the active site. Substrate contacts are provided by residues 86–87, asparagine 157, asparagine 189, and 207–208; these read GN and ER. Cysteine 216 functions as the Proton acceptor in the catalytic mechanism. 217 to 218 contributes to the substrate binding site; sequence GT.

This sequence belongs to the diaminopimelate epimerase family. Homodimer.

It localises to the cytoplasm. The catalysed reaction is (2S,6S)-2,6-diaminopimelate = meso-2,6-diaminopimelate. It participates in amino-acid biosynthesis; L-lysine biosynthesis via DAP pathway; DL-2,6-diaminopimelate from LL-2,6-diaminopimelate: step 1/1. Catalyzes the stereoinversion of LL-2,6-diaminopimelate (L,L-DAP) to meso-diaminopimelate (meso-DAP), a precursor of L-lysine and an essential component of the bacterial peptidoglycan. This Thermobifida fusca (strain YX) protein is Diaminopimelate epimerase.